The primary structure comprises 899 residues: AP-3 complex subunit delta (899 aa).

HEAT repeat units follow at residues 37 to 74 (QSPE…KLTY), 155 to 192 (ELAR…QYPE), 194 to 229 (LRDN…HNPQ), 231 to 267 (FIQL…IEPK), 268 to 305 (LRVK…LNSD), 308 to 344 (DSAV…KINT), 345 to 382 (DFIA…EDNL), 384 to 428 (DFVQ…ITAM), 480 to 518 (RTLA…LLDN), 536 to 580 (ELQQ…LIIS), 590 to 613 (SEAL…SLPL), and 614 to 656 (LLTE…TESE). 4 disordered regions span residues 668 to 701 (DGIV…PTHE), 741 to 768 (NLSN…KKKK), 782 to 801 (GVNT…SARN), and 849 to 899 (AAEE…LTTE). Over residues 743–759 (SNSKPSSSGSLVRLSSE) the composition is skewed to low complexity. A coiled-coil region spans residues 841–862 (QRLLDESAAAEEEVVVVKKKKR). Basic residues predominate over residues 857–880 (VKKKKRSKDGSKSSKKKSRSKSKP).

It belongs to the adaptor complexes large subunit family. Adaptor protein complex 3 (AP-3) is a heterotetramer composed of 2 large adaptins (APL5 and APL6), a medium adaptin (APM3) and a small adaptin (APS3).

It localises to the golgi apparatus. It is found in the cytoplasmic vesicle. The protein resides in the clathrin-coated vesicle membrane. Its function is as follows. Part of the AP-3 complex, an adaptor-related complex which is not clathrin-associated. The complex is associated with the Golgi region as well as more peripheral structures. It facilitates the budding of vesicles from the Golgi membrane and may be directly involved in trafficking to the vacuole. The protein is AP-3 complex subunit delta (APL5) of Eremothecium gossypii (strain ATCC 10895 / CBS 109.51 / FGSC 9923 / NRRL Y-1056) (Yeast).